The following is a 785-amino-acid chain: DNA ligase (785 aa).

NAD(+) contacts are provided by residues aspartate 32–aspartate 36, serine 81–leucine 82, and glutamate 121. Residue lysine 123 is the N6-AMP-lysine intermediate of the active site. 4 residues coordinate NAD(+): arginine 144, glutamate 181, lysine 297, and lysine 321. The Zn(2+) site is built by cysteine 415, cysteine 418, cysteine 445, and cysteine 451. Residues valine 702–alanine 785 enclose the BRCT domain.

Belongs to the NAD-dependent DNA ligase family. LigA subfamily. Mg(2+) serves as cofactor. Mn(2+) is required as a cofactor.

The enzyme catalyses NAD(+) + (deoxyribonucleotide)n-3'-hydroxyl + 5'-phospho-(deoxyribonucleotide)m = (deoxyribonucleotide)n+m + AMP + beta-nicotinamide D-nucleotide.. In terms of biological role, DNA ligase that catalyzes the formation of phosphodiester linkages between 5'-phosphoryl and 3'-hydroxyl groups in double-stranded DNA using NAD as a coenzyme and as the energy source for the reaction. It is essential for DNA replication and repair of damaged DNA. The sequence is that of DNA ligase from Pseudomonas fluorescens (strain Pf0-1).